The sequence spans 415 residues: Casein kinase I isoform delta (415 aa).

The Protein kinase domain maps to 9-277 (YRLGRKIGSG…YLRQLFRNLF (269 aa)). ATP contacts are provided by residues 15–23 (IGSGSFGDI) and Lys38. Asp128 acts as the Proton acceptor in catalysis. Residues 278-364 (HRQGFSYDYV…TSPRPVSGME (87 aa)) are centrosomal localization signal (CLS). The segment covering 301-315 (ADDAERERRDREERL) has biased composition (basic and acidic residues). The disordered stretch occupies residues 301–415 (ADDAERERRD…SSGLQSVVHR (115 aa)). The autoinhibitory stretch occupies residues 317–342 (HSRNPATRGLPSTASGRLRGTQEVAP). Phosphoserine is present on residues Ser328 and Ser331. Residues 347 to 358 (TPTSHTANTSPR) show a composition bias toward polar residues. Ser370 is subject to Phosphoserine. Position 375 is an omega-N-methylarginine (Arg375). Over residues 380–400 (NVSSSDLTGRQDTSRMSTSQI) the composition is skewed to polar residues. Residues Ser382, Ser383, Ser384, Pro401, Ser407, and Ser411 each carry the phosphoserine modification.

It belongs to the protein kinase superfamily. CK1 Ser/Thr protein kinase family. Casein kinase I subfamily. As to quaternary structure, monomer. Component of the circadian core oscillator, which includes the CRY proteins, CLOCK, or NPAS2, BMAL1 or BMAL2, CSNK1D and/or CSNK1E, TIMELESS and the PER proteins. Interacts directly with PER1 and PER2 which may lead to their degradation. Interacts with MAP1A. Interacts with MAPT/TAU, DBNDD2, AIB1/NCOA3 and ESR1. Interacts with AKAP9/AKAP450; this interaction promotes centrosomal subcellular location. Binds to tubulins in mitotic cells upon DNA damage. Interacts with GJA1. Interacts with SNAPIN. Interacts with DNMT1. Interacts with DDX3X; this interaction enhances CSNK1D kinase activity in vitro, but it is unclear whether this interaction is physiologically relevant. Interacts with FAM83A, FAM83B, FAM83E and FAM83H (via DUF1669). Autophosphorylated on serine and threonine residues; this autophosphorylation represses activity. Reactivated by phosphatase-mediated dephosphorylation. May be dephosphorylated by PP1. Expressed ubiquitously. However, kinase activity is not uniform, with highest kinase activity in splenocytes.

Its subcellular location is the cytoplasm. The protein localises to the nucleus. It localises to the cytoskeleton. The protein resides in the microtubule organizing center. It is found in the centrosome. Its subcellular location is the perinuclear region. The protein localises to the cell membrane. It localises to the spindle. The protein resides in the golgi apparatus. It carries out the reaction L-seryl-[protein] + ATP = O-phospho-L-seryl-[protein] + ADP + H(+). The catalysed reaction is L-threonyl-[protein] + ATP = O-phospho-L-threonyl-[protein] + ADP + H(+). The enzyme catalyses L-seryl-[tau protein] + ATP = O-phospho-L-seryl-[tau protein] + ADP + H(+). It catalyses the reaction L-threonyl-[tau protein] + ATP = O-phospho-L-threonyl-[tau protein] + ADP + H(+). Its activity is regulated as follows. Exhibits substrate-dependent heparin activation. Drug-mediated inhibition leads to a delay of the oscillations with the magnitude of this effect dependent upon the timing of drug administration. Inhibited by phosphorylation. Essential serine/threonine-protein kinase that regulates diverse cellular growth and survival processes including Wnt signaling, DNA repair and circadian rhythms. It can phosphorylate a large number of proteins. Casein kinases are operationally defined by their preferential utilization of acidic proteins such as caseins as substrates. Phosphorylates connexin-43/GJA1, MAP1A, SNAPIN, MAPT/TAU, TOP2A, DCK, HIF1A, EIF6, p53/TP53, DVL2, DVL3, ESR1, AIB1/NCOA3, DNMT1, PKD2, YAP1, PER1 and PER2. Central component of the circadian clock. In balance with PP1, determines the circadian period length through the regulation of the speed and rhythmicity of PER1 and PER2 phosphorylation. Controls PER1 and PER2 nuclear transport and degradation. YAP1 phosphorylation promotes its SCF(beta-TRCP) E3 ubiquitin ligase-mediated ubiquitination and subsequent degradation. DNMT1 phosphorylation reduces its DNA-binding activity. Phosphorylation of ESR1 and AIB1/NCOA3 stimulates their activity and coactivation. Phosphorylation of DVL2 and DVL3 regulates WNT3A signaling pathway that controls neurite outgrowth. Phosphorylates NEDD9/HEF1. EIF6 phosphorylation promotes its nuclear export. Triggers down-regulation of dopamine receptors in the forebrain. Activates DCK in vitro by phosphorylation. TOP2A phosphorylation favors DNA cleavable complex formation. May regulate the formation of the mitotic spindle apparatus in extravillous trophoblast. Modulates connexin-43/GJA1 gap junction assembly by phosphorylation. Probably involved in lymphocyte physiology. Regulates fast synaptic transmission mediated by glutamate. This Mus musculus (Mouse) protein is Casein kinase I isoform delta (Csnk1d).